Here is a 1704-residue protein sequence, read N- to C-terminus: Type-2 histone deacetylase 2 (1704 aa).

Disordered regions lie at residues 1 to 303 (MSTN…SEER), 315 to 383 (TQGS…TSKK), and 540 to 634 (QFLQ…IGNS). Residues 15-69 (TTITNESNTDNNNNNNDDNKNNTENTTSPTNNNNTNDNDNNSDNNNNKNNNNNNS) are compositionally biased toward low complexity. Positions 70 to 81 (QVTEEQQVTLED) are enriched in polar residues. The segment covering 97–113 (DSAEEDEDEMEDDDEDA) has biased composition (acidic residues). Over residues 134-153 (KVQQSTNTHLSQTTPESPTI) the composition is skewed to polar residues. Low complexity predominate over residues 165-176 (STSTNNTPNTQS). The segment covering 186–195 (LTSDEEKDLM) has biased composition (basic and acidic residues). Over residues 196 to 210 (LSEESDGGVGEDDDS) the composition is skewed to acidic residues. Residues 222–286 (NQSNQNQNNN…SNNDNNNNNN (65 aa)) show a composition bias toward low complexity. The span at 315–325 (TQGSSTTTSDP) shows a compositional bias: polar residues. The span at 326 to 351 (NNQNNQINQINQNNQNNQNNQNNQNN) shows a compositional bias: low complexity. Residues 354-369 (GEEEFGEEFEEEEEDM) are compositionally biased toward acidic residues. Over residues 372 to 382 (PKKKTKYKTSK) the composition is skewed to basic residues. 2 stretches are compositionally biased toward low complexity: residues 540–549 (QFLQQQQQQQ) and 561–580 (NSNN…NNNS). Positions 608-620 (YETRKYTKKRNDE) are enriched in basic and acidic residues. Positions 1165 and 1227 each coordinate substrate. A divalent metal cation is bound by residues D1256, H1258, and D1350. The segment at 1485–1704 (QLERQKQLQQ…TPQNINNSDN (220 aa)) is disordered. A compositionally biased stretch (low complexity) spans 1491 to 1616 (QLQQQQQQAQ…NNSNNNNNMN (126 aa)). A compositionally biased stretch (polar residues) spans 1649–1669 (LSPNSVNRGNNPSNISMSGAQ). Residues 1677-1698 (SPKPSNSPNSPSTSNNNGTPQN) are compositionally biased toward low complexity.

This sequence belongs to the histone deacetylase family. HD type 2 subfamily.

The protein resides in the nucleus. It localises to the cytoplasm. The catalysed reaction is N(6)-acetyl-L-lysyl-[histone] + H2O = L-lysyl-[histone] + acetate. Responsible for the deacetylation of lysine residues on the N-terminal part of the core histones (H2A, H2B, H3 and H4). Histone deacetylation plays an important role in transcriptional regulation, cell cycle progression and developmental events. Histone deacetylases act via the formation of large multiprotein complexes. The chain is Type-2 histone deacetylase 2 (hdaC) from Dictyostelium discoideum (Social amoeba).